Consider the following 373-residue polypeptide: Muconate cycloisomerase 1 (373 aa).

Lys169 is an active-site residue. The active-site Proton acceptor is Lys169. Mn(2+) contacts are provided by Asp198, Glu224, and Asp249. The Proton donor role is filled by Glu327.

It belongs to the mandelate racemase/muconate lactonizing enzyme family. The cofactor is Mn(2+).

It carries out the reaction (S)-muconolactone = cis,cis-muconate + H(+). In Rhodococcus opacus (Nocardia opaca), this protein is Muconate cycloisomerase 1 (catB).